Here is a 245-residue protein sequence, read N- to C-terminus: DNA polymerase sliding clamp (245 aa).

It belongs to the PCNA family. As to quaternary structure, homotrimer. The subunits circularize to form a toroid; DNA passes through its center. Replication factor C (RFC) is required to load the toroid on the DNA.

Its function is as follows. Sliding clamp subunit that acts as a moving platform for DNA processing. Responsible for tethering the catalytic subunit of DNA polymerase and other proteins to DNA during high-speed replication. The sequence is that of DNA polymerase sliding clamp from Archaeoglobus fulgidus (strain ATCC 49558 / DSM 4304 / JCM 9628 / NBRC 100126 / VC-16).